Here is a 306-residue protein sequence, read N- to C-terminus: MDALDKVLKPKTKRAKRFLEKREPKLTENIKNAMLIKGGNANATVTQVLRDMYALKKPYGVLYKKKNITRPFEDQTSLEFFSKKSDCSLFMFGSHNKKRPNNLVIGRMYDYHVLDMIELGIEKFVSLKDIKTSKCPEGTKPMLIFAGDDFDVTEDFRRLKNLLIDFFRGPTVSNVRLAGLEYVLHFTALNGKVYFRSYKLLLKKSGCRTPRIELEEMGPSLDLVMRRTHLASDDLYKLSMKVPKALKPKKRKNISQDTFGTTFGRIHMQKQDLSKLQTRKMKGLKKRPAENGVDDQGKKSKRIKKN.

In terms of domain architecture, Brix spans 31 to 234 (KNAMLIKGGN…MRRTHLASDD (204 aa)). Residues 270 to 306 (KQDLSKLQTRKMKGLKKRPAENGVDDQGKKSKRIKKN) are disordered. Over residues 277 to 286 (QTRKMKGLKK) the composition is skewed to basic residues.

Belongs to the RPF2 family. In terms of assembly, component of a hexameric 5S RNP precursor complex, composed of 5S RNA, RRS1, RPF2/BXDC1, RPL5, RPL11 and HEATR3; this complex acts as a precursor for ribosome assembly.

It localises to the nucleus. It is found in the nucleolus. In terms of biological role, involved in ribosomal large subunit assembly. May regulate the localization of the 5S RNP/5S ribonucleoprotein particle to the nucleolus. The sequence is that of Ribosome production factor 2 homolog (Rpf2) from Mus musculus (Mouse).